Reading from the N-terminus, the 541-residue chain is MSTNLLRLILLFITLSITSSLSTPSPADSPPYLWPLPAEFSFGNETLSVDPTVTLIVAGNGGGSLIIRAAFDRYMGIIFKHASGRGSLLSRIRFLKMVEYDITSLKIVVHSDSEELQLGVDESYTLMVSKKNEQSIVGAATIEANTVYGALRGLETFSQLCAFDYITKSVQIYKAPWYIQDKPRFGYRGLLIDTSRHYLPIDVIKQIIESMSFAKLNVLHWHIVDEQSFPLETPTYPNLWKGAYSRWERYTVEDASEIVRFAKMRGINVMAEVDVPGHAESWGTGYPDLWPSLSCREPLDVTKNFTFDVISGILADMRKIFPFELFHLGGDEVNTDCWKNTTHVKEWLQGRNFTTKDAYKYFVLRAQQIAISKNWTPVNWEETFSSFGKDLDPRTVIQNWLVSDICQKAVAKGFRCIFSNQGYWYLDHLDVPWEEVYNTEPLNGIEDPSLQKLVIGGEVCMWGETADTSVVLQTIWPRAAAAAERMWSTREAVSKGNITLTALPRLHYFRCLLNNRGVPAAPVDNFYARRPPLGPGSCYAQ.

The first 20 residues, 1–20, serve as a signal peptide directing secretion; the sequence is MSTNLLRLILLFITLSITSS. 2 N-linked (GlcNAc...) asparagine glycosylation sites follow: Asn44 and Asn304. Cys295 and Cys337 are joined by a disulfide. Glu332 functions as the Proton donor in the catalytic mechanism. N-linked (GlcNAc...) asparagine glycans are attached at residues Asn340, Asn352, and Asn497. Cysteines 511 and 538 form a disulfide.

The protein belongs to the glycosyl hydrolase 20 family. In terms of processing, N-glycosylated. Expressed in roots, leaves, stems, flowers and siliques.

It localises to the vacuole. The catalysed reaction is Hydrolysis of terminal non-reducing N-acetyl-D-hexosamine residues in N-acetyl-beta-D-hexosaminides.. Inhibited by N-acetylcastanospermine, 2-acet-amido-1,2-dideoxynojirimycin and PUGNAc. In terms of biological role, has a broad substrate specificity. Can use synthetic substrates such as pyridylaminated chitotriose, pyridylaminated chitobiose, p-nitrophenyl-beta-N-acetylglucosaminide, p-nitrophenyl-2-acetamido-2-deoxy-beta-D-glucopyranoside (pNP-GlcNAc), p-nitrophenyl-2-acetamido-2-deoxy-beta-D-galactopyranoside (pNP-GalNAc), 4-methylumbelliferyl-2-acetamido-2-deoxy-beta-D-glucopyranoside (MU-GlcNAc), and 4-methylumbelliferyl-6-sulfo-2-acetamido-2-deoxy-beta-D-glucopyranoside (MU-GlcNAc-6SO(4)) as substrates. Removes terminal GlcNAc residues from alpha1,3- and alpha1,6-mannosyl branches of biantennary N-glycans without any strict branch preference. Required for the presence of paucimannosidic N-glycans in glycoproteins of roots and, to a lower extent, of leaves. This is Beta-hexosaminidase 1 (HEXO1) from Arabidopsis thaliana (Mouse-ear cress).